The following is a 372-amino-acid chain: Histidinol-phosphate aminotransferase (372 aa).

The residue at position 234 (Lys234) is an N6-(pyridoxal phosphate)lysine.

The protein belongs to the class-II pyridoxal-phosphate-dependent aminotransferase family. Histidinol-phosphate aminotransferase subfamily. As to quaternary structure, homodimer. Pyridoxal 5'-phosphate serves as cofactor.

The catalysed reaction is L-histidinol phosphate + 2-oxoglutarate = 3-(imidazol-4-yl)-2-oxopropyl phosphate + L-glutamate. It participates in amino-acid biosynthesis; L-histidine biosynthesis; L-histidine from 5-phospho-alpha-D-ribose 1-diphosphate: step 7/9. This is Histidinol-phosphate aminotransferase (hisC) from Corynebacterium efficiens (strain DSM 44549 / YS-314 / AJ 12310 / JCM 11189 / NBRC 100395).